Here is a 109-residue protein sequence, read N- to C-terminus: Large ribosomal subunit protein uL24 (109 aa).

Belongs to the universal ribosomal protein uL24 family. In terms of assembly, part of the 50S ribosomal subunit.

In terms of biological role, one of two assembly initiator proteins, it binds directly to the 5'-end of the 23S rRNA, where it nucleates assembly of the 50S subunit. One of the proteins that surrounds the polypeptide exit tunnel on the outside of the subunit. In Ehrlichia chaffeensis (strain ATCC CRL-10679 / Arkansas), this protein is Large ribosomal subunit protein uL24.